The sequence spans 295 residues: Small ribosomal subunit protein uS2 (295 aa).

The protein belongs to the universal ribosomal protein uS2 family. Component of the small ribosomal subunit. Mature ribosomes consist of a small (40S) and a large (60S) subunit. The 40S subunit contains about 33 different proteins and 1 molecule of RNA (18S). The 60S subunit contains about 49 different proteins and 3 molecules of RNA (25S, 5.8S and 5S). Interacts with RPS21.

It is found in the cytoplasm. Required for the assembly and/or stability of the 40S ribosomal subunit. Required for the processing of the 20S rRNA-precursor to mature 18S rRNA in a late step of the maturation of 40S ribosomal subunits. The protein is Small ribosomal subunit protein uS2 of Paracoccidioides brasiliensis (strain Pb18).